Consider the following 241-residue polypeptide: 2-C-methyl-D-erythritol 4-phosphate cytidylyltransferase (241 aa).

Belongs to the IspD/TarI cytidylyltransferase family. IspD subfamily. As to quaternary structure, homodimer.

It carries out the reaction 2-C-methyl-D-erythritol 4-phosphate + CTP + H(+) = 4-CDP-2-C-methyl-D-erythritol + diphosphate. Its pathway is isoprenoid biosynthesis; isopentenyl diphosphate biosynthesis via DXP pathway; isopentenyl diphosphate from 1-deoxy-D-xylulose 5-phosphate: step 2/6. Functionally, catalyzes the formation of 4-diphosphocytidyl-2-C-methyl-D-erythritol from CTP and 2-C-methyl-D-erythritol 4-phosphate (MEP). This is 2-C-methyl-D-erythritol 4-phosphate cytidylyltransferase from Yersinia pseudotuberculosis serotype IB (strain PB1/+).